Consider the following 481-residue polypeptide: Ribulose bisphosphate carboxylase large chain (481 aa).

Residues 1-2 constitute a propeptide that is removed on maturation; sequence MS. N-acetylproline is present on P3. K14 is modified (N6,N6,N6-trimethyllysine). Substrate-binding residues include N123 and T173. Residue K175 is the Proton acceptor of the active site. K177 is a substrate binding site. Residues K201, D203, and E204 each contribute to the Mg(2+) site. At K201 the chain carries N6-carboxylysine. The Proton acceptor role is filled by H294. R295, H327, and S379 together coordinate substrate.

The protein belongs to the RuBisCO large chain family. Type I subfamily. As to quaternary structure, heterohexadecamer of 8 large chains and 8 small chains; disulfide-linked. The disulfide link is formed within the large subunit homodimers. Mg(2+) serves as cofactor. The disulfide bond which can form in the large chain dimeric partners within the hexadecamer appears to be associated with oxidative stress and protein turnover.

The protein resides in the plastid. The catalysed reaction is 2 (2R)-3-phosphoglycerate + 2 H(+) = D-ribulose 1,5-bisphosphate + CO2 + H2O. It carries out the reaction D-ribulose 1,5-bisphosphate + O2 = 2-phosphoglycolate + (2R)-3-phosphoglycerate + 2 H(+). Functionally, ruBisCO catalyzes two reactions: the carboxylation of D-ribulose 1,5-bisphosphate, the primary event in carbon dioxide fixation, as well as the oxidative fragmentation of the pentose substrate in the photorespiration process. Both reactions occur simultaneously and in competition at the same active site. The polypeptide is Ribulose bisphosphate carboxylase large chain (Cuscuta gronovii (Common dodder)).